A 119-amino-acid polypeptide reads, in one-letter code: Beta-2-microglobulin (119 aa).

An N-terminal signal peptide occupies residues 1–20; that stretch reads MARFVVAALLVLLSLSGLEA. In terms of domain architecture, Ig-like C1-type spans 25-114; sequence PKIQVYSRHP…MTFPAPKTVK (90 aa). C45 and C100 are joined by a disulfide.

It belongs to the beta-2-microglobulin family. As to quaternary structure, heterodimer of an alpha chain and a beta chain. Beta-2-microglobulin is the beta-chain of major histocompatibility complex class I molecules.

The protein resides in the secreted. Component of the class I major histocompatibility complex (MHC). Involved in the presentation of peptide antigens to the immune system. In Pithecia irrorata (Gray monk saki), this protein is Beta-2-microglobulin (B2M).